The chain runs to 307 residues: Ribosomal RNA small subunit methyltransferase H (307 aa).

S-adenosyl-L-methionine is bound by residues 34 to 36 (GGH), Asp-54, Phe-79, Asp-101, and Gln-108.

It belongs to the methyltransferase superfamily. RsmH family.

Its subcellular location is the cytoplasm. The enzyme catalyses cytidine(1402) in 16S rRNA + S-adenosyl-L-methionine = N(4)-methylcytidine(1402) in 16S rRNA + S-adenosyl-L-homocysteine + H(+). In terms of biological role, specifically methylates the N4 position of cytidine in position 1402 (C1402) of 16S rRNA. This Ruthia magnifica subsp. Calyptogena magnifica protein is Ribosomal RNA small subunit methyltransferase H.